The sequence spans 532 residues: Probable pectinesterase/pectinesterase inhibitor 39 (532 aa).

The signal sequence occupies residues 1–34 (MINNHPIREKPKHIIFNLLSLIFFLIFLSTVVSS). The pectinesterase inhibitor 39 stretch occupies residues 35-169 (QSPSYTTHKT…ENLKEIILDI (135 aa)). N-linked (GlcNAc...) asparagine glycosylation is found at N62, N74, N85, N172, N221, N231, N244, and N287. Residues 221-518 (NLSVAIDGTG…FTVGPFIDGS (298 aa)) form a pectinesterase 39 region. 2 residues coordinate substrate: T296 and Q326. The Proton donor; for pectinesterase activity role is filled by D349. D370 serves as the catalytic Nucleophile; for pectinesterase activity. N-linked (GlcNAc...) asparagine glycosylation is found at N382 and N404. R438 and W440 together coordinate substrate. N502 and N522 each carry an N-linked (GlcNAc...) asparagine glycan.

In the N-terminal section; belongs to the PMEI family. This sequence in the C-terminal section; belongs to the pectinesterase family. In terms of tissue distribution, expressed in siliques but not in flower buds.

The protein resides in the secreted. Its subcellular location is the cell wall. It catalyses the reaction [(1-&gt;4)-alpha-D-galacturonosyl methyl ester](n) + n H2O = [(1-&gt;4)-alpha-D-galacturonosyl](n) + n methanol + n H(+). The protein operates within glycan metabolism; pectin degradation; 2-dehydro-3-deoxy-D-gluconate from pectin: step 1/5. In terms of biological role, acts in the modification of cell walls via demethylesterification of cell wall pectin. This is Probable pectinesterase/pectinesterase inhibitor 39 (PME39) from Arabidopsis thaliana (Mouse-ear cress).